Reading from the N-terminus, the 413-residue chain is Multifunctional CCA protein (413 aa).

Positions 8 and 11 each coordinate ATP. CTP-binding residues include G8 and R11. Mg(2+) contacts are provided by D21 and D23. R91, R137, and R140 together coordinate ATP. Positions 91, 137, and 140 each coordinate CTP. The HD domain occupies 228–329 (TGIHTLMVLA…IKIFDKADLW (102 aa)).

It belongs to the tRNA nucleotidyltransferase/poly(A) polymerase family. Bacterial CCA-adding enzyme type 1 subfamily. Monomer. Can also form homodimers and oligomers. It depends on Mg(2+) as a cofactor. Ni(2+) is required as a cofactor.

The catalysed reaction is a tRNA precursor + 2 CTP + ATP = a tRNA with a 3' CCA end + 3 diphosphate. The enzyme catalyses a tRNA with a 3' CCA end + 2 CTP + ATP = a tRNA with a 3' CCACCA end + 3 diphosphate. In terms of biological role, catalyzes the addition and repair of the essential 3'-terminal CCA sequence in tRNAs without using a nucleic acid template. Adds these three nucleotides in the order of C, C, and A to the tRNA nucleotide-73, using CTP and ATP as substrates and producing inorganic pyrophosphate. tRNA 3'-terminal CCA addition is required both for tRNA processing and repair. Also involved in tRNA surveillance by mediating tandem CCA addition to generate a CCACCA at the 3' terminus of unstable tRNAs. While stable tRNAs receive only 3'-terminal CCA, unstable tRNAs are marked with CCACCA and rapidly degraded. In Shewanella woodyi (strain ATCC 51908 / MS32), this protein is Multifunctional CCA protein.